The following is a 350-amino-acid chain: Biotin synthase (350 aa).

One can recognise a Radical SAM core domain in the interval 54–278 (REIQLSTLLS…TMPQSYVRLS (225 aa)). [4Fe-4S] cluster contacts are provided by Cys-69, Cys-73, and Cys-76. Residues Cys-113, Cys-144, Cys-204, and Arg-276 each contribute to the [2Fe-2S] cluster site.

Belongs to the radical SAM superfamily. Biotin synthase family. As to quaternary structure, homodimer. [4Fe-4S] cluster is required as a cofactor. Requires [2Fe-2S] cluster as cofactor.

It carries out the reaction (4R,5S)-dethiobiotin + (sulfur carrier)-SH + 2 reduced [2Fe-2S]-[ferredoxin] + 2 S-adenosyl-L-methionine = (sulfur carrier)-H + biotin + 2 5'-deoxyadenosine + 2 L-methionine + 2 oxidized [2Fe-2S]-[ferredoxin]. It participates in cofactor biosynthesis; biotin biosynthesis; biotin from 7,8-diaminononanoate: step 2/2. Its function is as follows. Catalyzes the conversion of dethiobiotin (DTB) to biotin by the insertion of a sulfur atom into dethiobiotin via a radical-based mechanism. The sequence is that of Biotin synthase from Neisseria meningitidis serogroup A / serotype 4A (strain DSM 15465 / Z2491).